We begin with the raw amino-acid sequence, 1117 residues long: Zinc finger E-box-binding homeobox 1 (1117 aa).

Disordered regions lie at residues 1 to 103 (MADG…QNHD) and 122 to 143 (APEE…NGTP). The segment covering 15 to 30 (PRRNNVTNYNTVVEAN) has biased composition (low complexity). Phosphoserine occurs at positions 31 and 33. The C2H2-type 1 zinc finger occupies 150–173 (LTCPYCDRGYKRFTSLKEHIKYRH). Glycyl lysine isopeptide (Lys-Gly) (interchain with G-Cter in SUMO2) cross-links involve residues Lys-166 and Lys-175. 2 consecutive C2H2-type zinc fingers follow at residues 180–202 (FSCS…MTSH) and 220–242 (FKCT…LRIH). A C2H2-type 4; atypical zinc finger spans residues 248–272 (YECPNCKKRFSHSGSYSSHISSKKC). Residues 278–307 (VNGRPRSGLKTSQCSSPSLSTSPGSPTRPQ) form a disordered region. Lys-287 participates in a covalent cross-link: Glycyl lysine isopeptide (Lys-Gly) (interchain with G-Cter in SUMO2). Residues 288–304 (TSQCSSPSLSTSPGSPT) are compositionally biased toward low complexity. 2 positions are modified to phosphoserine: Ser-293 and Ser-302. Glycyl lysine isopeptide (Lys-Gly) (interchain with G-Cter in SUMO2) cross-links involve residues Lys-311 and Lys-315. Lys-327 participates in a covalent cross-link: Glycyl lysine isopeptide (Lys-Gly) (interchain with G-Cter in SUMO); alternate. A Glycyl lysine isopeptide (Lys-Gly) (interchain with G-Cter in SUMO2); alternate cross-link involves residue Lys-327. Glycyl lysine isopeptide (Lys-Gly) (interchain with G-Cter in SUMO2) cross-links involve residues Lys-419, Lys-473, Lys-484, Lys-495, and Lys-528. Disordered regions lie at residues 476 to 501 (IPAP…TDKS), 528 to 566 (KHYD…SQPP), and 613 to 687 (GQIP…SPLN). Basic and acidic residues predominate over residues 484-501 (KSEKLPEDLTVKSETDKS). The segment at residues 559–618 (DLSPSQPPLKNLLSLLKAYYALNAQPSTEELSKIADSVNLPLDGVKKWFEKMQAGQIPGQ) is a DNA-binding region (homeobox; atypical). Phosphoserine is present on residues Ser-657, Ser-664, Ser-671, and Ser-678. The segment covering 673-687 (MNGSRSCTSSPSPLN) has biased composition (polar residues). The residue at position 680 (Thr-680) is a Phosphothreonine. Residue Ser-682 is modified to Phosphoserine. Lys-752 is covalently cross-linked (Glycyl lysine isopeptide (Lys-Gly) (interchain with G-Cter in SUMO); alternate). Lys-752 participates in a covalent cross-link: Glycyl lysine isopeptide (Lys-Gly) (interchain with G-Cter in SUMO2); alternate. The disordered stretch occupies residues 834–876 (PPVKVIQPNGNQDERQDTSSEGVSTVEDQNDSDSTPPKKKTRK). Positions 852-868 (SSEGVSTVEDQNDSDST) are enriched in polar residues. C2H2-type zinc fingers lie at residues 882-904 (YACD…KYEH) and 910-932 (HECG…MRLH). The segment at 938-959 (YQCDKCGKRFSHSGSYSQHMNH) adopts a C2H2-type 7; atypical zinc-finger fold. The tract at residues 991-1117 (EHVGARASPS…QLSEEKTNEA (127 aa)) is disordered. 3 stretches are compositionally biased toward acidic residues: residues 1013–1032 (EEDE…MEEL), 1042–1069 (QGEE…DEAE), and 1098–1109 (SEMESESESEQL).

Belongs to the delta-EF1/ZFH-1 C2H2-type zinc-finger family. As to quaternary structure, interacts (via N-terminus) with SMARCA4/BRG1. In terms of processing, ubiquitinated, leading to degradation in a proteasome-dependent manner. Deubiquitinated by USP51, leading to stabilization. As to expression, expressed in the external germinal layer (EGL) and internal granular layer (IGL) of the cerebellum (at protein level).

It is found in the nucleus. Its function is as follows. Acts as a transcriptional repressor. Binds to E-box sequences in the immunoglobulin heavy chain enhancer as well as in the regulatory regions of many other tissue-specific genes. Represses E-cadherin promoter and induces an epithelial-mesenchymal transition (EMT) by recruiting SMARCA4/BRG1. Represses BCL6 transcription in the presence of the corepressor CTBP1. Positively regulates neuronal differentiation. Represses RCOR1 transcription activation during neurogenesis. Represses transcription by binding to the E box (5'-CANNTG-3'). In the absence of TGFB1, acts as a repressor of COL1A2 transcription via binding to the E-box in the upstream enhancer region. Promotes tumorigenicity by repressing stemness-inhibiting microRNAs. The chain is Zinc finger E-box-binding homeobox 1 from Mus musculus (Mouse).